The chain runs to 130 residues: Small ribosomal subunit protein uS11 (130 aa).

The segment at 111-130 is disordered; sequence IRDVTPVPHNGSRPPKRRRA.

This sequence belongs to the universal ribosomal protein uS11 family. Part of the 30S ribosomal subunit. Interacts with proteins S7 and S18. Binds to IF-3.

In terms of biological role, located on the platform of the 30S subunit, it bridges several disparate RNA helices of the 16S rRNA. Forms part of the Shine-Dalgarno cleft in the 70S ribosome. The sequence is that of Small ribosomal subunit protein uS11 from Lactobacillus acidophilus (strain ATCC 700396 / NCK56 / N2 / NCFM).